The primary structure comprises 334 residues: Transmembrane protein 41 homolog (334 aa).

The N-linked (GlcNAc...) asparagine glycan is linked to Asn43. The segment at 47–79 is disordered; sequence KNKNNNIDNKKNSNNNNNNNNNNNNKNSISNNN. A glycan (N-linked (GlcNAc...) asparagine) is linked at Asn83. 6 helical membrane-spanning segments follow: residues 97-117, 156-176, 192-214, 246-266, 269-289, and 305-325; these read LPLW…VFLF, FIVI…SIPG, VGFP…ISYY, IVFL…ASPL, VPIH…TFLA, and IFDL…ILPT.

It belongs to the TMEM41 family.

It localises to the membrane. In Dictyostelium discoideum (Social amoeba), this protein is Transmembrane protein 41 homolog.